The chain runs to 508 residues: Photosystem II CP47 reaction center protein (508 aa).

Transmembrane regions (helical) follow at residues 21–36, 101–115, 140–156, 203–218, 237–252, and 457–472; these read SVHI…WAGS, IVFS…IWHW, GIHL…FGAF, IAAG…FHLS, VLSS…AFVV, and SFAL…HGAR.

It belongs to the PsbB/PsbC family. PsbB subfamily. PSII is composed of 1 copy each of membrane proteins PsbA, PsbB, PsbC, PsbD, PsbE, PsbF, PsbH, PsbI, PsbJ, PsbK, PsbL, PsbM, PsbT, PsbX, PsbY, PsbZ, Psb30/Ycf12, at least 3 peripheral proteins of the oxygen-evolving complex and a large number of cofactors. It forms dimeric complexes. The cofactor is Binds multiple chlorophylls. PSII binds additional chlorophylls, carotenoids and specific lipids..

The protein resides in the plastid. The protein localises to the chloroplast thylakoid membrane. One of the components of the core complex of photosystem II (PSII). It binds chlorophyll and helps catalyze the primary light-induced photochemical processes of PSII. PSII is a light-driven water:plastoquinone oxidoreductase, using light energy to abstract electrons from H(2)O, generating O(2) and a proton gradient subsequently used for ATP formation. This chain is Photosystem II CP47 reaction center protein, found in Carica papaya (Papaya).